Here is a 352-residue protein sequence, read N- to C-terminus: MASWPPLQLQSSNQSQLFPQNATACDNAPEAWDLLHRVLPTFIISICSFGLLGNLFVLLVFLLPRRRLNVAEIYLANLAASDLVFVLGLPFWAENIWNQFNWPFGALLCRVINGIIKANLFISIFLVVAISQDRYCVLVHPMASRRRQRRRQARVTCVLIWVVGGLLSIPTFLLRSIQAVPDLNITACILLLPHEAWHFARIVELNILAFLLPLAAIIFFNYHILASLRGREEVSRTRCGGSKDSKTTALILTLVVAFLVCWAPYHFFAFLEFLFQVQAVRGCFWEDFIDLGLQLANFLAFTNSSLNPVIYVFAGRLFRTKVWELYKQCTPKSLAPISSSHRKEIFQLFWRN.

Residues 1–41 (MASWPPLQLQSSNQSQLFPQNATACDNAPEAWDLLHRVLPT) lie on the Extracellular side of the membrane. Residues Asn13 and Asn21 are each glycosylated (N-linked (GlcNAc...) asparagine). The helical transmembrane segment at 42-62 (FIISICSFGLLGNLFVLLVFL) threads the bilayer. Topologically, residues 63–72 (LPRRRLNVAE) are cytoplasmic. A helical membrane pass occupies residues 73–93 (IYLANLAASDLVFVLGLPFWA). Residues 94-110 (ENIWNQFNWPFGALLCR) lie on the Extracellular side of the membrane. Residues Cys109 and Cys188 are joined by a disulfide bond. A helical membrane pass occupies residues 111–131 (VINGIIKANLFISIFLVVAIS). At 132 to 153 (QDRYCVLVHPMASRRRQRRRQA) the chain is on the cytoplasmic side. The chain crosses the membrane as a helical span at residues 154 to 174 (RVTCVLIWVVGGLLSIPTFLL). Residues 175–206 (RSIQAVPDLNITACILLLPHEAWHFARIVELN) lie on the Extracellular side of the membrane. A glycan (N-linked (GlcNAc...) asparagine) is linked at Asn184. The chain crosses the membrane as a helical span at residues 207-227 (ILAFLLPLAAIIFFNYHILAS). The Cytoplasmic portion of the chain corresponds to 228-250 (LRGREEVSRTRCGGSKDSKTTAL). A helical transmembrane segment spans residues 251–271 (ILTLVVAFLVCWAPYHFFAFL). Over 272 to 294 (EFLFQVQAVRGCFWEDFIDLGLQ) the chain is Extracellular. A helical transmembrane segment spans residues 295 to 315 (LANFLAFTNSSLNPVIYVFAG). The Cytoplasmic segment spans residues 316–352 (RLFRTKVWELYKQCTPKSLAPISSSHRKEIFQLFWRN). The S-palmitoyl cysteine moiety is linked to residue Cys329.

This sequence belongs to the G-protein coupled receptor 1 family. Bradykinin receptor subfamily. BDKRB1 sub-subfamily.

It is found in the cell membrane. In terms of biological role, this is a receptor for bradykinin. Could be a factor in chronic pain and inflammation. This chain is B1 bradykinin receptor (BDKRB1), found in Macaca fascicularis (Crab-eating macaque).